We begin with the raw amino-acid sequence, 267 residues long: tRNA-cytidine(32) 2-sulfurtransferase 1 (267 aa).

Residues 42–47 carry the PP-loop motif motif; it reads SGGKDS. Positions 117, 120, and 208 each coordinate [4Fe-4S] cluster.

The protein belongs to the TtcA family. As to quaternary structure, homodimer. The cofactor is Mg(2+). Requires [4Fe-4S] cluster as cofactor.

The protein localises to the cytoplasm. The enzyme catalyses cytidine(32) in tRNA + S-sulfanyl-L-cysteinyl-[cysteine desulfurase] + AH2 + ATP = 2-thiocytidine(32) in tRNA + L-cysteinyl-[cysteine desulfurase] + A + AMP + diphosphate + H(+). It functions in the pathway tRNA modification. In terms of biological role, catalyzes the ATP-dependent 2-thiolation of cytidine in position 32 of tRNA, to form 2-thiocytidine (s(2)C32). The sulfur atoms are provided by the cysteine/cysteine desulfurase (IscS) system. The chain is tRNA-cytidine(32) 2-sulfurtransferase 1 from Francisella tularensis subsp. tularensis (strain FSC 198).